We begin with the raw amino-acid sequence, 422 residues long: 5-hydroxytryptamine receptor 1A (422 aa).

A disordered region spans residues 1 to 23 (MDVLSPGQGNNTTSPPAPFETGG). Residues 1 to 38 (MDVLSPGQGNNTTSPPAPFETGGNTTGISDVTFSYQVI) lie on the Extracellular side of the membrane. N-linked (GlcNAc...) asparagine glycosylation is found at asparagine 10, asparagine 11, and asparagine 24. A helical membrane pass occupies residues 39–59 (TSLLLGTLIFCAVLGNACVVA). At 60–73 (AIALERSLQNVANY) the chain is on the cytoplasmic side. The helical transmembrane segment at 74–98 (LIGSLAVTDLMVSVLVLPMAALYQV) threads the bilayer. The Extracellular portion of the chain corresponds to 99-107 (LNKWTLGQV). A helical membrane pass occupies residues 108-132 (TCDLFIALDVLCCTSSILHLCAIAL). Residues cysteine 109 and cysteine 187 are joined by a disulfide bond. Serotonin-binding residues include aspartate 116 and cysteine 120. Positions 133-135 (DRY) match the DRY motif; important for ligand-induced conformation changes motif. Topologically, residues 133–152 (DRYWAITDPIDYVNKRTPRR) are cytoplasmic. A helical transmembrane segment spans residues 153–174 (AAALISLTWLIGFLISIPPMLG). Topologically, residues 175–193 (WRTPEDRSDPDACTISKDH) are extracellular. A helical transmembrane segment spans residues 194 to 216 (GYTIYSTFGAFYIPLLLMLVLYG). Residues 217–346 (RIFRAARFRI…LARERKTVKT (130 aa)) lie on the Cytoplasmic side of the membrane. Residues 235–262 (KTGADTRHGASPAPQPKKSVNGESGSRN) are disordered. Threonine 314, lysine 345, threonine 346, and glycine 352 together coordinate 1D-myo-inositol 4-phosphate. A helical membrane pass occupies residues 347-370 (LGIIMGTFILCWLPFFIVALVLPF). The Extracellular segment spans residues 371–378 (CESSCHMP). Residues 379–403 (TLLGAIINWLGYSNSLLNPVIYAYF) form a helical membrane-spanning segment. Residues 396-400 (NPVIY) carry the NPxxY motif; important for ligand-induced conformation changes and signaling motif. Residues phenylalanine 403, asparagine 404, and lysine 405 each contribute to the 1D-myo-inositol 4-phosphate site. The Cytoplasmic portion of the chain corresponds to 404-422 (NKDFQNAFKKIIKCKFCRQ).

It belongs to the G-protein coupled receptor 1 family. 5-hydroxytryptamine receptor subfamily. HTR1A sub-subfamily. In terms of assembly, heterodimer; heterodimerizes with GPER1. Interacts with YIF1B. Interacts with GPR39 and GALR1.

It localises to the cell membrane. It is found in the cell projection. Its subcellular location is the dendrite. With respect to regulation, G-protein coupled receptor activity is regulated by lipids: phosphatidylinositol 4-phosphate increases HTR1A-mediated activity. G-protein coupled receptor for 5-hydroxytryptamine (serotonin). Also functions as a receptor for various drugs and psychoactive substances. Ligand binding causes a conformation change that triggers signaling via guanine nucleotide-binding proteins (G proteins) and modulates the activity of downstream effectors, such as adenylate cyclase. HTR1A is coupled to G(i)/G(o) G alpha proteins and mediates inhibitory neurotransmission: signaling inhibits adenylate cyclase activity and activates a phosphatidylinositol-calcium second messenger system that regulates the release of Ca(2+) ions from intracellular stores. Beta-arrestin family members regulate signaling by mediating both receptor desensitization and resensitization processes. This chain is 5-hydroxytryptamine receptor 1A (HTR1A), found in Gorilla gorilla gorilla (Western lowland gorilla).